Consider the following 445-residue polypeptide: Sporulation protein YkvU (445 aa).

12 helical membrane passes run 7–29, 39–61, 82–104, 109–131, 144–166, 172–194, 237–259, 269–291, 312–334, 349–371, 376–395, and 400–422; these read GIIL…NMIL, GLYM…ELPI, AFRM…LPFI, TYHP…TSIA, IAIA…FQWY, MAVL…YLYS, VNAI…GTAA, VAVT…MIPS, IFIT…GPLT, LLWP…IGMG, AFYH…YVLG, and LQML…LHYA.

It localises to the forespore membrane. This chain is Sporulation protein YkvU (ykvU), found in Bacillus subtilis (strain 168).